We begin with the raw amino-acid sequence, 323 residues long: Aldo-keto reductase family 1 member C18 (323 aa).

NADP(+)-binding positions include 20–24 (GFGTY) and Asp-50. Residue Tyr-55 is the Proton donor of the active site. A substrate-binding site is contributed by His-117. NADP(+) is bound by residues 166–167 (SN), Gln-190, 216–221 (YGALGT), and 270–280 (KSFNEERIREN).

It belongs to the aldo/keto reductase family. Monomer.

The protein localises to the cytoplasm. The catalysed reaction is (17R,20S)-17,20-dihydroxypregn-4-en-3-one + NADP(+) = 17alpha-hydroxyprogesterone + NADPH + H(+). The enzyme catalyses (17R,20S)-17,20-dihydroxypregn-4-en-3-one + NAD(+) = 17alpha-hydroxyprogesterone + NADH + H(+). Catalyzes the conversion of progesterone into 20-alpha-dihydroprogesterone (20 alpha-OHP). The polypeptide is Aldo-keto reductase family 1 member C18 (Akr1c18) (Mus musculus (Mouse)).